A 224-amino-acid polypeptide reads, in one-letter code: Glutathione S-transferase Mu 5 (224 aa).

A GST N-terminal domain is found at 4-91; that stretch reads KSMVLGYWDI…YIARKHNMCG (88 aa). Ser5 carries the post-translational modification Phosphoserine. Glutathione-binding positions include 10–11, 49–53, 62–63, and 75–76; these read YW, WLDVK, NL, and QS. Residues 93 to 211 form the GST C-terminal domain; sequence TEEEKIRVDI…QSDRFFKMPI (119 aa). A substrate-binding site is contributed by Tyr119.

Belongs to the GST superfamily. Mu family. As to quaternary structure, homodimer. Interacts with PFKM isoform 2 and isoform 3 (via N-terminal testis-specific region).

It is found in the cytoplasm. The catalysed reaction is RX + glutathione = an S-substituted glutathione + a halide anion + H(+). In terms of biological role, conjugation of reduced glutathione to a wide number of exogenous and endogenous hydrophobic electrophiles. This is Glutathione S-transferase Mu 5 (Gstm5) from Mus musculus (Mouse).